The following is a 51-amino-acid chain: Small ribosomal subunit protein eS31 (51 aa).

Residues cysteine 22, cysteine 25, cysteine 40, and cysteine 43 each contribute to the Zn(2+) site. The segment at 22–43 (CPRCGPGVFMADHGDRWACGRC) adopts a C4-type zinc-finger fold.

This sequence belongs to the eukaryotic ribosomal protein eS31 family. Part of the 30S ribosomal subunit. Zn(2+) serves as cofactor.

This Pyrococcus abyssi (strain GE5 / Orsay) protein is Small ribosomal subunit protein eS31.